The primary structure comprises 1845 residues: Helicase swr-1 (1845 aa).

Residues 1 to 13 (MTTMMTDSGTASD) are compositionally biased toward polar residues. The tract at residues 1 to 329 (MTTMMTDSGT…GASRATPRIK (329 aa)) is disordered. Low complexity predominate over residues 24–38 (NDTTTTTTTTTTPGD). Residues 63-84 (SKSYSSTHHVPAIDNTSTTNAN) show a composition bias toward polar residues. A compositionally biased stretch (low complexity) spans 98 to 108 (SPLSSISSPLS). Basic and acidic residues predominate over residues 168–180 (PKPESPPWKKFEA). The span at 216–243 (AIQTSPVSNKSSASTSRKPAPASSSNSK) shows a compositional bias: polar residues. 2 stretches are compositionally biased toward pro residues: residues 248 to 258 (KMPPPPPPPKA) and 283 to 292 (PRRPATPPKP). One can recognise an HSA domain in the interval 418–493 (PEAEEEPPRQ…EMEASKAKWR (76 aa)). 2 disordered regions span residues 539–713 (QKLQ…LFFG) and 749–935 (ELQV…TVKT). A compositionally biased stretch (acidic residues) spans 549–565 (DGDEITDEDEDEDDEDL). Residues 574 to 585 (GDEKESDEHSDQ) show a composition bias toward basic and acidic residues. Acidic residues-rich tracts occupy residues 586–608 (GSDEMSDENDEDEDEDNMSSSED) and 663–704 (NDDD…DDEP). 2 stretches are compositionally biased toward polar residues: residues 762–777 (TNGTHTNEQLASSQTE) and 815–834 (TNDSSLKYPNEIVQSENQTL). Low complexity predominate over residues 888-897 (SQSQTQSPKT). Over residues 898–909 (TDTKPTDVDTPH) the composition is skewed to basic and acidic residues. Positions 922–933 (RQSSPQPTTPTV) are enriched in polar residues. In terms of domain architecture, Helicase ATP-binding spans 957-1122 (AGLYANNTNG…WSLLYFLAPP (166 aa)). An ATP-binding site is contributed by 970–977 (DEMGLGKT). The DEAH box motif lies at 1073–1076 (DEAH). A Helicase C-terminal domain is found at 1510-1660 (ALDKLLRKLQ…DVVIQEGEFT (151 aa)). 3 disordered regions span residues 1702 to 1724 (TTGAGGYDGTADGGGGASQPPVR), 1751 to 1783 (QDEADFGEAGSTRPGTPGDGLADLDGQLLGGEE), and 1816 to 1845 (LEGTPLELPRDRKKGRDRNRNRKGKDSRKR). Over residues 1704 to 1718 (GAGGYDGTADGGGGA) the composition is skewed to gly residues. The segment covering 1769-1781 (DGLADLDGQLLGG) has biased composition (low complexity). The span at 1826–1845 (DRKKGRDRNRNRKGKDSRKR) shows a compositional bias: basic residues.

It belongs to the SNF2/RAD54 helicase family. SWR1 subfamily. Component of the SWR1 chromatin-remodeling complex.

It localises to the nucleus. The enzyme catalyses ATP + H2O = ADP + phosphate + H(+). Its function is as follows. Catalytic component of the SWR1 complex which mediates the ATP-dependent exchange of histone H2A for the H2A variant H2A.Z leading to transcriptional regulation of selected genes by chromatin remodeling. This Neurospora crassa (strain ATCC 24698 / 74-OR23-1A / CBS 708.71 / DSM 1257 / FGSC 987) protein is Helicase swr-1 (crf1-1).